Here is a 643-residue protein sequence, read N- to C-terminus: ATP-dependent RNA helicase DeaD (643 aa).

Positions 6–34 (TTFADLGLKAPILEALTDLGYEKPSPIQA) match the Q motif motif. A Helicase ATP-binding domain is found at 37–208 (IPHLLDGRDV…RRFMKEPQEV (172 aa)). 50-57 (AQTGSGKT) serves as a coordination point for ATP. Residues 156–159 (DEAD) carry the DEAD box motif. One can recognise a Helicase C-terminal domain in the interval 232–379 (KNEALVRFLE…EVELPNAELL (148 aa)). 2 disordered regions span residues 440 to 482 (VPPV…KRER) and 557 to 643 (MNMQ…GGDA). Basic and acidic residues-rich tracts occupy residues 448–482 (PRRE…KRER) and 567–643 (PRTE…GGDA).

It belongs to the DEAD box helicase family. DeaD/CsdA subfamily.

Its subcellular location is the cytoplasm. It catalyses the reaction ATP + H2O = ADP + phosphate + H(+). Its function is as follows. DEAD-box RNA helicase involved in various cellular processes at low temperature, including ribosome biogenesis, mRNA degradation and translation initiation. The chain is ATP-dependent RNA helicase DeaD from Klebsiella pneumoniae.